A 124-amino-acid chain; its full sequence is Large ribosomal subunit protein uL22 (124 aa).

Belongs to the universal ribosomal protein uL22 family. As to quaternary structure, part of the 50S ribosomal subunit.

Its function is as follows. This protein binds specifically to 23S rRNA; its binding is stimulated by other ribosomal proteins, e.g. L4, L17, and L20. It is important during the early stages of 50S assembly. It makes multiple contacts with different domains of the 23S rRNA in the assembled 50S subunit and ribosome. The globular domain of the protein is located near the polypeptide exit tunnel on the outside of the subunit, while an extended beta-hairpin is found that lines the wall of the exit tunnel in the center of the 70S ribosome. The polypeptide is Large ribosomal subunit protein uL22 (Treponema pallidum (strain Nichols)).